Reading from the N-terminus, the 95-residue chain is Co-chaperonin GroES (95 aa).

Belongs to the GroES chaperonin family. In terms of assembly, heptamer of 7 subunits arranged in a ring. Interacts with the chaperonin GroEL.

Its subcellular location is the cytoplasm. Its function is as follows. Together with the chaperonin GroEL, plays an essential role in assisting protein folding. The GroEL-GroES system forms a nano-cage that allows encapsulation of the non-native substrate proteins and provides a physical environment optimized to promote and accelerate protein folding. GroES binds to the apical surface of the GroEL ring, thereby capping the opening of the GroEL channel. The sequence is that of Co-chaperonin GroES from Rickettsia canadensis (strain McKiel).